The chain runs to 1029 residues: Protein STABILIZED1 (1029 aa).

The region spanning 1-85 (MVFLSIPNGK…VIIHVLLLGG (85 aa)) is the Ubiquitin-like domain. A Glycyl lysine isopeptide (Gly-Lys) (interchain with K-? in acceptor proteins) cross-link involves residue Gly85. The segment at 142–170 (AAPGVGRGAGKPSEAEAEDDEEAEEKRYD) is disordered. The stretch at 210–243 (DSRRKDRREAKLKEEIEKYRASNPKITEQFADLK) forms a coiled coil. 15 HAT repeats span residues 367-399 (YDRN…VEEV), 401-431 (GKIK…CRLA), 432-462 (NPED…KLEH), 463-494 (DVEN…LANE), 496-524 (DARI…LETY), 526-554 (ESKK…LEEA), 639-671 (GSIE…LEKS), 673-705 (GSRE…EKWL), 707-739 (GDVP…LEFE), 741-772 (KEPE…VERE), 774-806 (GNVE…LEER), 808-840 (KHLE…LEEK), 842-874 (NGLN…AELR), 876-908 (DNKR…MAPR), and 940-972 (KKVE…FELQ). The TPR 1 repeat unit spans residues 625–658 (KRTWVADADECKKRGSIETARAIYAHALSVFLTK). Residues 794-827 (FKLWLMLGQLEERFKHLEQARKAYDTGLKHCPHC) form a TPR 2 repeat. A TPR 3 repeat occupies 926 to 959 (PHVTIAVAKLFWQDKKVEKARAWFERAVTVGPDI).

In terms of assembly, component of a pre-mRNA splicing complex. Interacts with ZOP1. Interacts with PRP31. As to expression, ubiquitous.

The protein localises to the nucleus. It is found in the cajal body. Functionally, pre-mRNA splicing factor required for splicing and for the turnover of unstable transcripts. May be a U5 snRNP-associated protein involved in the formation of U4/U6-U5 tri-snRNP. Involved in responses to abiotic stresses. Involved in microRNAs (miRNAs) biogenesis by functioning in primary miRNAs (pri-miRNAs) splicing. Required for DNA methylation and transcriptional silencing through the RNA-directed DNA methylation (RdDM) pathway. The sequence is that of Protein STABILIZED1 (STA1) from Arabidopsis thaliana (Mouse-ear cress).